A 193-amino-acid polypeptide reads, in one-letter code: 3-isopropylmalate dehydratase small subunit (193 aa).

Belongs to the LeuD family. LeuD type 1 subfamily. Heterodimer of LeuC and LeuD.

It catalyses the reaction (2R,3S)-3-isopropylmalate = (2S)-2-isopropylmalate. It functions in the pathway amino-acid biosynthesis; L-leucine biosynthesis; L-leucine from 3-methyl-2-oxobutanoate: step 2/4. In terms of biological role, catalyzes the isomerization between 2-isopropylmalate and 3-isopropylmalate, via the formation of 2-isopropylmaleate. The polypeptide is 3-isopropylmalate dehydratase small subunit (Listeria innocua serovar 6a (strain ATCC BAA-680 / CLIP 11262)).